A 71-amino-acid chain; its full sequence is Gas vesicle protein A (71 aa).

Positions 12-22 are alpha helix 1; sequence LAEVIDRILDK. Residues 26–34 form a beta-strand 1 region; that stretch reads IDAWARVSL. Residues 35–37 form a beta turn region; sequence VGI. The tract at residues 38–46 is beta-strand 2; it reads ELLAIEARV. The segment at 51-70 is alpha helix 2; that stretch reads VETYLKYAEAVGLTQXAXXA.

The protein belongs to the gas vesicle GvpA family. In terms of assembly, the gas vesicle shell is 2 nm thick and consists of a single layer of this protein. It forms helical ribs nearly perpendicular to the long axis of the vesicle.

The protein localises to the gas vesicle shell. Its function is as follows. Gas vesicles are hollow, gas filled proteinaceous nanostructures found in some microorganisms. During planktonic growth they allow positioning of the organism at a favorable depth for light or nutrient acquisition. GvpA forms the protein shell. This is Gas vesicle protein A from Microcystis sp. (strain BC 84/1).